We begin with the raw amino-acid sequence, 601 residues long: RNA-binding protein MEX3B (601 aa).

Disordered stretches follow at residues 1–39 (MPSS…DDQR) and 90–109 (GRQG…ISPT). Position 4 is a phosphoserine (Ser4). Residues 13–33 (GSGGGGGGGGGGGGGGSGGGE) show a composition bias toward gly residues. 2 KH domains span residues 98–159 (DGDR…RREI) and 192–253 (QTTI…REEI). Disordered stretches follow at residues 284-332 (LHHG…TDSY) and 344-448 (TSRL…GGAS). Residue Ser320 is modified to Phosphoserine. Low complexity-rich tracts occupy residues 320 to 331 (SSSSLGSASTDS) and 362 to 371 (NGNNNNNGNG). Positions 395 to 404 (DPAPAPPPGT) are enriched in pro residues. Over residues 420–442 (AAPVSSSCSSSASSSASSSSVVF) the composition is skewed to low complexity. Ser494 is subject to Phosphoserine. Residues 514–546 (LPGLPSSDTSGSSSSSSSSSSSSSSSSGLRRKG) form a disordered region. The segment covering 519–540 (SSDTSGSSSSSSSSSSSSSSSS) has biased composition (low complexity). The RING-type zinc-finger motif lies at 550–590 (CSVCFESEVIAALVPCGHNLFCMECANRICEKSEPECPVCH).

Post-translationally, phosphorylation at Ser-494 creates a docking site for 14-3-3, which stabilizes the protein and modulates its ability to bind RNA.

The protein localises to the cytoplasm. It is found in the nucleus. The protein resides in the P-body. Its subcellular location is the cytoplasmic granule. RNA-binding protein. May be involved in post-transcriptional regulatory mechanisms. This chain is RNA-binding protein MEX3B (Mex3b), found in Mus musculus (Mouse).